The sequence spans 726 residues: uncharacterized protein (726 aa).

The Thioredoxin domain occupies 10-135 (MRISWVVAFI…LLDFVETHLN (126 aa)). Disordered regions lie at residues 133–153 (HLNP…TDED) and 227–280 (VTSV…NPTG). The segment covering 138–153 (TDPDIPSDEDVLTDED) has biased composition (acidic residues). A helical membrane pass occupies residues 675-695 (IRVLYMVLGIVTVGILVWYFS). Position 708 is a phosphoserine (S708).

It localises to the membrane. This is an uncharacterized protein from Schizosaccharomyces pombe (strain 972 / ATCC 24843) (Fission yeast).